The chain runs to 510 residues: Archaeosine synthase subunit alpha (510 aa).

Residues 427 to 510 enclose the PUA domain; sequence LGKFTINKAS…LKKGIAVKVR (84 aa).

This sequence belongs to the archaeosine synthase type 1 family. In terms of assembly, forms a robust complex with the archaeosine synthase beta subunit RaSEA, likely an alpha(2)beta(2) heterotetrameric structure. Formation of this complex highly increases lysine transfer activity.

It carries out the reaction 7-cyano-7-carbaguanosine(15) in tRNA + L-lysine = 7-N-[(5S)-5-amino-5-carboxypentyl]formamidino-7-deazaguanosine(15) in tRNA. It functions in the pathway tRNA modification; archaeosine-tRNA biosynthesis. Functionally, functions in the biosynthesis of archaeosine, a modified nucleoside present in the dihydrouridine loop (D-loop) of archaeal tRNAs. Catalyzes the addition of L-lysine to the cyano group of 7-cyano-7-deazaguanine (preQ0)-modified tRNAs at position 15, to generate q0kN15-tRNA, a q0N lysine adduct identified as 7-N-[(5S)-5-amino-5-carboxypentyl]formamidino-7-deazaguanosine. This chain is Archaeosine synthase subunit alpha, found in Thermoplasma acidophilum (strain ATCC 25905 / DSM 1728 / JCM 9062 / NBRC 15155 / AMRC-C165).